We begin with the raw amino-acid sequence, 358 residues long: Aromatic amino acid aminotransferase (358 aa).

Lys-214 carries the post-translational modification N6-(pyridoxal phosphate)lysine.

It belongs to the class-II pyridoxal-phosphate-dependent aminotransferase family. As to quaternary structure, homodimer. The cofactor is pyridoxal 5'-phosphate.

The catalysed reaction is an aromatic L-alpha-amino acid + 2-oxoglutarate = an aromatic oxo-acid + L-glutamate. Functionally, aminotransferase that catalyzes the conversion of aromatic amino acids and 2-oxoglutarate into corresponding aromatic oxo acids and L-glutamate. The polypeptide is Aromatic amino acid aminotransferase (Rhodococcus erythropolis (strain PR4 / NBRC 100887)).